Here is a 103-residue protein sequence, read N- to C-terminus: Co-chaperonin GroES (103 aa).

The protein belongs to the GroES chaperonin family. As to quaternary structure, heptamer of 7 subunits arranged in a ring. Interacts with the chaperonin GroEL.

Its subcellular location is the cytoplasm. In terms of biological role, together with the chaperonin GroEL, plays an essential role in assisting protein folding. The GroEL-GroES system forms a nano-cage that allows encapsulation of the non-native substrate proteins and provides a physical environment optimized to promote and accelerate protein folding. GroES binds to the apical surface of the GroEL ring, thereby capping the opening of the GroEL channel. This Synechococcus sp. (strain JA-2-3B'a(2-13)) (Cyanobacteria bacterium Yellowstone B-Prime) protein is Co-chaperonin GroES.